We begin with the raw amino-acid sequence, 239 residues long: Uridylate kinase (239 aa).

Lys13–Gly16 provides a ligand contact to ATP. Gly55 is a binding site for UMP. Positions 56 and 60 each coordinate ATP. Residues Asp75 and Thr136–Thr143 each bind UMP. ATP-binding residues include Thr163, Gln164, Tyr169, and Asp172.

Belongs to the UMP kinase family. Homohexamer.

It localises to the cytoplasm. It carries out the reaction UMP + ATP = UDP + ADP. It functions in the pathway pyrimidine metabolism; CTP biosynthesis via de novo pathway; UDP from UMP (UMPK route): step 1/1. Its activity is regulated as follows. Inhibited by UTP. Functionally, catalyzes the reversible phosphorylation of UMP to UDP. In Bartonella bacilliformis (strain ATCC 35685 / KC583 / Herrer 020/F12,63), this protein is Uridylate kinase.